We begin with the raw amino-acid sequence, 677 residues long: Methionine--tRNA ligase (677 aa).

The short motif at 15–25 (PYANGSIHLGH) is the 'HIGH' region element. 4 residues coordinate Zn(2+): Cys146, Cys149, Cys159, and Cys162. The 'KMSKS' region motif lies at 333-337 (KMSKS). Residue Lys336 participates in ATP binding. Residues 575–677 (DFAKVDLRVA…DGAKPGQQVK (103 aa)) enclose the tRNA-binding domain.

Belongs to the class-I aminoacyl-tRNA synthetase family. MetG type 1 subfamily. As to quaternary structure, homodimer. Zn(2+) is required as a cofactor.

The protein localises to the cytoplasm. The catalysed reaction is tRNA(Met) + L-methionine + ATP = L-methionyl-tRNA(Met) + AMP + diphosphate. In terms of biological role, is required not only for elongation of protein synthesis but also for the initiation of all mRNA translation through initiator tRNA(fMet) aminoacylation. In Klebsiella pneumoniae subsp. pneumoniae (strain ATCC 700721 / MGH 78578), this protein is Methionine--tRNA ligase.